Consider the following 479-residue polypeptide: Anaerobic nitric oxide reductase flavorubredoxin (479 aa).

The zinc metallo-hydrolase stretch occupies residues 30–210; it reads LRGSSYNSYL…PFSRLVTPKI (181 aa). Positions 79, 81, 83, 147, 166, and 227 each coordinate Fe cation. A Flavodoxin-like domain is found at 254–393; the sequence is ITIFYDTMSN…LCRQHGRDIA (140 aa). Residues 260-264 and 342-369 contribute to the FMN site; these read TMSNN and AFGS…EMSL. Positions 423–474 constitute a Rubredoxin-like domain; it reads GPKMQCSVCQWIYDPALGEPLQDVAPGTPWSEVPDNFLCPECSLGKDVFDVL. Residues Cys428, Cys431, Cys461, and Cys464 each contribute to the Fe cation site.

The protein in the N-terminal section; belongs to the zinc metallo-hydrolase group 3 family. As to quaternary structure, homotetramer. It depends on Fe cation as a cofactor. FMN is required as a cofactor.

Its subcellular location is the cytoplasm. It functions in the pathway nitrogen metabolism; nitric oxide reduction. Functionally, anaerobic nitric oxide reductase; uses NADH to detoxify nitric oxide (NO), protecting several 4Fe-4S NO-sensitive enzymes. Has at least 2 reductase partners, only one of which (NorW, flavorubredoxin reductase) has been identified. NO probably binds to the di-iron center; electrons enter from the NorW at rubredoxin and are transferred sequentially to the FMN center and the di-iron center. Also able to function as an aerobic oxygen reductase. This chain is Anaerobic nitric oxide reductase flavorubredoxin, found in Salmonella paratyphi A (strain ATCC 9150 / SARB42).